Reading from the N-terminus, the 263-residue chain is tRNA pseudouridine synthase A (263 aa).

The Nucleophile role is filled by Asp-57. Tyr-115 contributes to the substrate binding site.

Belongs to the tRNA pseudouridine synthase TruA family. As to quaternary structure, homodimer.

The enzyme catalyses uridine(38/39/40) in tRNA = pseudouridine(38/39/40) in tRNA. Its function is as follows. Formation of pseudouridine at positions 38, 39 and 40 in the anticodon stem and loop of transfer RNAs. The polypeptide is tRNA pseudouridine synthase A (Buchnera aphidicola subsp. Schizaphis graminum (strain Sg)).